Reading from the N-terminus, the 190-residue chain is Crossover junction endodeoxyribonuclease RuvC (190 aa).

Active-site residues include Asp8, Glu67, and Asp139. Residues Asp8, Glu67, and Asp139 each contribute to the Mg(2+) site.

Belongs to the RuvC family. Homodimer which binds Holliday junction (HJ) DNA. The HJ becomes 2-fold symmetrical on binding to RuvC with unstacked arms; it has a different conformation from HJ DNA in complex with RuvA. In the full resolvosome a probable DNA-RuvA(4)-RuvB(12)-RuvC(2) complex forms which resolves the HJ. Mg(2+) is required as a cofactor.

The protein localises to the cytoplasm. It carries out the reaction Endonucleolytic cleavage at a junction such as a reciprocal single-stranded crossover between two homologous DNA duplexes (Holliday junction).. In terms of biological role, the RuvA-RuvB-RuvC complex processes Holliday junction (HJ) DNA during genetic recombination and DNA repair. Endonuclease that resolves HJ intermediates. Cleaves cruciform DNA by making single-stranded nicks across the HJ at symmetrical positions within the homologous arms, yielding a 5'-phosphate and a 3'-hydroxyl group; requires a central core of homology in the junction. The consensus cleavage sequence is 5'-(A/T)TT(C/G)-3'. Cleavage occurs on the 3'-side of the TT dinucleotide at the point of strand exchange. HJ branch migration catalyzed by RuvA-RuvB allows RuvC to scan DNA until it finds its consensus sequence, where it cleaves and resolves the cruciform DNA. The sequence is that of Crossover junction endodeoxyribonuclease RuvC from Haemophilus influenzae (strain PittGG).